The sequence spans 91 residues: Large ribosomal subunit protein bL31B (91 aa).

This sequence belongs to the bacterial ribosomal protein bL31 family. Type B subfamily. In terms of assembly, part of the 50S ribosomal subunit.

The sequence is that of Large ribosomal subunit protein bL31B from Neisseria gonorrhoeae (strain ATCC 700825 / FA 1090).